The following is a 1277-amino-acid chain: Myosin-1 (1277 aa).

A compositionally biased stretch (basic residues) spans 1 to 13; the sequence is MAPSKKAGKKVTP. Residues 1 to 27 are disordered; that stretch reads MAPSKKAGKKVTPKKAAGNNAKSKVAK. Positions 39-718 constitute a Myosin motor domain; it reads VGVTDMTLLT…TLFALETMRD (680 aa). 132-139 is a binding site for ATP; sequence GESGAGKT. The residue at position 360 (S360) is a Phosphoserine. Residues 407 to 489 are actin-binding; that stretch reads IIGILDIFGF…PGIFAALNDA (83 aa). Residues 567 to 587 form a disordered region; it reads LFPDRPDPNSKKRPPTASDRI. 2 consecutive IQ domains span residues 722 to 742 and 743 to 768; these read HNMA…KHEC and ARRI…YGHQ. The TH1 domain occupies 776 to 965; that stretch reads RRRFSLLSYR…TVHVPSGEPA (190 aa). 2 disordered regions span residues 952-1072 and 1129-1259; these read YKSH…AEPE and PKAA…GPGQ. The span at 1015–1056 shows a compositional bias: low complexity; sequence PAVATPSVVSTPAAAAVVSKPKPAASTPAAVRAPAVTPAARS. Residues 1057-1068 show a composition bias toward pro residues; that stretch reads VPPPPPPPPPAR. Positions 1071 to 1129 constitute an SH3 domain; sequence PEKEMYRAKFDFQGQEGEMSLTKDDEVELIEKDENGWWLVKKDGVEAWAPYNYLERIAP. The span at 1132 to 1142 shows a compositional bias: pro residues; that stretch reads APAPPPPPARP. Composition is skewed to polar residues over residues 1145–1159 and 1185–1197; these read TSTV…TTAD and AATT…SSRP. The span at 1204 to 1224 shows a compositional bias: pro residues; that stretch reads VPPPVAAKPKPPVVAPKPGVP. Residues 1226 to 1240 are compositionally biased toward low complexity; sequence PGGKPALPTTARPAP. Gly residues predominate over residues 1241–1258; sequence SGGGAAAGRLGGGGGGPG.

Belongs to the TRAFAC class myosin-kinesin ATPase superfamily. Myosin family. Phosphorylation of the TEDS site (Ser-360) is required for the polarization of the actin cytoskeleton. Phosphorylation probably activates the myosin-I ATPase activity.

It is found in the cytoplasm. Its subcellular location is the cytoskeleton. The protein resides in the actin patch. In terms of biological role, type-I myosin implicated in the organization of the actin cytoskeleton. Required for proper actin cytoskeleton polarization. At the cell cortex, assembles in patch-like structures together with proteins from the actin-polymerizing machinery and promotes actin assembly. Functions as actin nucleation-promoting factor (NPF) for the Arp2/3 complex. The protein is Myosin-1 (MYO1) of Coprinopsis cinerea (strain Okayama-7 / 130 / ATCC MYA-4618 / FGSC 9003) (Inky cap fungus).